The chain runs to 192 residues: 3-hydroxyanthranilate 3,4-dioxygenase 1 (192 aa).

Residue Arg-50 participates in O2 binding. Residues His-54, Glu-60, and His-102 each coordinate Fe cation. Residue Glu-60 participates in substrate binding. Residues Arg-106 and Glu-116 each coordinate substrate. A divalent metal cation-binding residues include Cys-131, Cys-134, Cys-168, and Cys-171.

Belongs to the 3-HAO family. Fe(2+) is required as a cofactor.

The protein resides in the cytoplasm. The catalysed reaction is 3-hydroxyanthranilate + O2 = (2Z,4Z)-2-amino-3-carboxymuconate 6-semialdehyde. It participates in cofactor biosynthesis; NAD(+) biosynthesis; quinolinate from L-kynurenine: step 3/3. Catalyzes the oxidative ring opening of 3-hydroxyanthranilate to 2-amino-3-carboxymuconate semialdehyde, which spontaneously cyclizes to quinolinate. The chain is 3-hydroxyanthranilate 3,4-dioxygenase 1 (bna1-1) from Aspergillus oryzae (strain ATCC 42149 / RIB 40) (Yellow koji mold).